Consider the following 828-residue polypeptide: DNA gyrase subunit A (828 aa).

One can recognise a Topo IIA-type catalytic domain in the interval 38–501 (LPDARDGLKP…SYESIDTEDL (464 aa)). The active-site O-(5'-phospho-DNA)-tyrosine intermediate is Y126. The short motif at 528 to 534 (QNRGGKG) is the GyrA-box element.

This sequence belongs to the type II topoisomerase GyrA/ParC subunit family. As to quaternary structure, heterotetramer, composed of two GyrA and two GyrB chains. In the heterotetramer, GyrA contains the active site tyrosine that forms a transient covalent intermediate with DNA, while GyrB binds cofactors and catalyzes ATP hydrolysis.

The protein resides in the cytoplasm. It carries out the reaction ATP-dependent breakage, passage and rejoining of double-stranded DNA.. A type II topoisomerase that negatively supercoils closed circular double-stranded (ds) DNA in an ATP-dependent manner to modulate DNA topology and maintain chromosomes in an underwound state. Negative supercoiling favors strand separation, and DNA replication, transcription, recombination and repair, all of which involve strand separation. Also able to catalyze the interconversion of other topological isomers of dsDNA rings, including catenanes and knotted rings. Type II topoisomerases break and join 2 DNA strands simultaneously in an ATP-dependent manner. In Helicobacter pylori (strain J99 / ATCC 700824) (Campylobacter pylori J99), this protein is DNA gyrase subunit A.